Consider the following 416-residue polypeptide: Counting factor 60 (416 aa).

A signal peptide spans 1-22 (MIKKSALITLFLVSLILGVSLS). Asparagine 110, asparagine 218, asparagine 231, asparagine 318, and asparagine 411 each carry an N-linked (GlcNAc...) asparagine glycan.

The protein belongs to the histidine acid phosphatase family. Component of the counting factor (CF) complex, which includes cf60, cf50, cf45-1 and ctnA.

It is found in the secreted. Functionally, cell-counting factor that limits the maximum size of the multicellular structure. Does not possess acid phosphatase activity. Cells with decreased levels of this protein form large groups while cells overexpressing this protein form small groups. In Dictyostelium discoideum (Social amoeba), this protein is Counting factor 60 (cf60).